Reading from the N-terminus, the 236-residue chain is Leucyl/phenylalanyl-tRNA--protein transferase (236 aa).

Residues M1–S13 show a composition bias toward polar residues. The interval M1 to S22 is disordered.

It belongs to the L/F-transferase family.

The protein resides in the cytoplasm. The catalysed reaction is N-terminal L-lysyl-[protein] + L-leucyl-tRNA(Leu) = N-terminal L-leucyl-L-lysyl-[protein] + tRNA(Leu) + H(+). It catalyses the reaction N-terminal L-arginyl-[protein] + L-leucyl-tRNA(Leu) = N-terminal L-leucyl-L-arginyl-[protein] + tRNA(Leu) + H(+). It carries out the reaction L-phenylalanyl-tRNA(Phe) + an N-terminal L-alpha-aminoacyl-[protein] = an N-terminal L-phenylalanyl-L-alpha-aminoacyl-[protein] + tRNA(Phe). In terms of biological role, functions in the N-end rule pathway of protein degradation where it conjugates Leu, Phe and, less efficiently, Met from aminoacyl-tRNAs to the N-termini of proteins containing an N-terminal arginine or lysine. This chain is Leucyl/phenylalanyl-tRNA--protein transferase, found in Shewanella piezotolerans (strain WP3 / JCM 13877).